The primary structure comprises 329 residues: E3 ubiquitin-protein ligase SINA-like 4 (329 aa).

Residues 1–12 (MTKLGRRNDGGG) show a composition bias toward basic and acidic residues. The segment at 1–58 (MTKLGRRNDGGGKSHRSSTKRQRRTSVSVDDPSPGEEEEKTLVVLTDDSDSEEDDKPL) is disordered. A compositionally biased stretch (basic residues) spans 13–24 (KSHRSSTKRQRR). The RING-type; degenerate zinc-finger motif lies at 86–122 (CPNCFDPLKKPIFQCNNGHLACFLCCIKLKKRCSFCK). The SBD stretch occupies residues 136–325 (VIKAGLVSCS…MEISIGDKND (190 aa)). An SIAH-type zinc finger spans residues 139-198 (AGLVSCSNAIYGCKQSTTYGNQLQSHEKVCVFAPCSCPIKDCNYIGFYKDLINHFRATHK). Cys144, Cys151, His164, Cys168, Cys175, Cys180, His192, and His197 together coordinate Zn(2+).

It belongs to the SINA (Seven in absentia) family.

It catalyses the reaction S-ubiquitinyl-[E2 ubiquitin-conjugating enzyme]-L-cysteine + [acceptor protein]-L-lysine = [E2 ubiquitin-conjugating enzyme]-L-cysteine + N(6)-ubiquitinyl-[acceptor protein]-L-lysine.. It functions in the pathway protein modification; protein ubiquitination. In terms of biological role, E3 ubiquitin-protein ligase that mediates ubiquitination and subsequent proteasomal degradation of target proteins. E3 ubiquitin ligases accept ubiquitin from an E2 ubiquitin-conjugating enzyme in the form of a thioester and then directly transfers the ubiquitin to targeted substrates. It probably triggers the ubiquitin-mediated degradation of different substrates. This chain is E3 ubiquitin-protein ligase SINA-like 4, found in Arabidopsis thaliana (Mouse-ear cress).